Consider the following 374-residue polypeptide: Ribosomal RNA large subunit methyltransferase G (374 aa).

It belongs to the methyltransferase superfamily. RlmG family.

The protein resides in the cytoplasm. It catalyses the reaction guanosine(1835) in 23S rRNA + S-adenosyl-L-methionine = N(2)-methylguanosine(1835) in 23S rRNA + S-adenosyl-L-homocysteine + H(+). Its function is as follows. Specifically methylates the guanine in position 1835 (m2G1835) of 23S rRNA. The chain is Ribosomal RNA large subunit methyltransferase G from Pseudomonas putida (strain ATCC 47054 / DSM 6125 / CFBP 8728 / NCIMB 11950 / KT2440).